The chain runs to 246 residues: DNA repair protein RecO (246 aa).

This sequence belongs to the RecO family.

Functionally, involved in DNA repair and RecF pathway recombination. In Methylobacterium nodulans (strain LMG 21967 / CNCM I-2342 / ORS 2060), this protein is DNA repair protein RecO.